Consider the following 251-residue polypeptide: Segregation and condensation protein A (251 aa).

Belongs to the ScpA family. Component of a cohesin-like complex composed of ScpA, ScpB and the Smc homodimer, in which ScpA and ScpB bind to the head domain of Smc. The presence of the three proteins is required for the association of the complex with DNA.

Its subcellular location is the cytoplasm. Its function is as follows. Participates in chromosomal partition during cell division. May act via the formation of a condensin-like complex containing Smc and ScpB that pull DNA away from mid-cell into both cell halves. This is Segregation and condensation protein A from Bacillus licheniformis (strain ATCC 14580 / DSM 13 / JCM 2505 / CCUG 7422 / NBRC 12200 / NCIMB 9375 / NCTC 10341 / NRRL NRS-1264 / Gibson 46).